We begin with the raw amino-acid sequence, 203 residues long: Mitotic spindle checkpoint component mad2 (203 aa).

Positions 13–197 (KGSSKLVSEF…TSMHKIDCQV (185 aa)) constitute an HORMA domain.

It belongs to the MAD2 family. Interacts with mad3 and slp1.

Its subcellular location is the nucleus. Feedback control that prevents cells with incompletely assembled spindles from leaving mitosis. It interacts with the anaphase promoting complex/cyclosome (APC/C) thereby inhibiting APC/C-dependent proteolysis, a step required for exit from mitosis. The sequence is that of Mitotic spindle checkpoint component mad2 from Schizosaccharomyces pombe (strain 972 / ATCC 24843) (Fission yeast).